The chain runs to 43 residues: Protein PsbN (43 aa).

A helical membrane pass occupies residues Thr5–Phe27.

It belongs to the PsbN family.

The protein localises to the plastid. Its subcellular location is the chloroplast thylakoid membrane. May play a role in photosystem I and II biogenesis. The polypeptide is Protein PsbN (Mesostigma viride (Green alga)).